The following is a 78-amino-acid chain: Large ribosomal subunit protein bL28 (78 aa).

This sequence belongs to the bacterial ribosomal protein bL28 family.

This is Large ribosomal subunit protein bL28 from Shigella boydii serotype 4 (strain Sb227).